A 376-amino-acid polypeptide reads, in one-letter code: MVSWKGIYFILFLFAGSFFGSIFMLGPILPLMFINLSWYRWISSRLVATWLTLPVALLETMFGVRVVITGDAFVPGERSVIIMNHRTRVDWMFLWNCLMRYSYLRVEKICLKSSLKSVPGFGWAMQVAAFIFIHRKWKDDKSHFEDMIDYFCAIHEPLQLLIFPEGTDLTENNKARSNDFAEKNGLQKYEYVLHPRTTGFTFVVDRLREGKNLDAVHDITVAYPYNIPQTEKHLLLGDFPKEIHFHVQRYPADSLPTSKEDLQLWCHRRWEEKEERLRSFYQGEKNFHFTGQSTVPPCKSELRVLVVKLLSIVYWALFCSAMCLLIYLYSPVRWYFIISIVFFVLQERIFGGLEIIELACYRFLHKHPHLNSKKNE.

The helical transmembrane segment at 9 to 29 (FILFLFAGSFFGSIFMLGPIL) threads the bilayer. An N-linked (GlcNAc...) asparagine glycan is attached at N35. The chain crosses the membrane as a helical span at residues 48-68 (ATWLTLPVALLETMFGVRVVI). Positions 85–90 (HRTRVD) match the HXXXXD motif motif. N6-acetyllysine is present on K183. The next 2 membrane-spanning stretches (helical) occupy residues 309-329 (LLSIVYWALFCSAMCLLIYLY) and 336-356 (FIISIVFFVLQERIFGGLEII).

It belongs to the 1-acyl-sn-glycerol-3-phosphate acyltransferase family. Widely expressed with highest expression in heart, liver and 12.5 dpc aorta-gonad-mesonephros and lower levels in the 16 dpc fetal liver and adult bone marrow. In bone marrow, highest levels are found in B-cells compared with whole bone marrow, T-cells, erythrocytes, and granulocytes.

It is found in the endoplasmic reticulum membrane. The enzyme catalyses a 1-acyl-sn-glycero-3-phosphate + an acyl-CoA = a 1,2-diacyl-sn-glycero-3-phosphate + CoA. It catalyses the reaction a 1-acyl-sn-glycero-3-phospho-(1D-myo-inositol) + an acyl-CoA = a 1,2-diacyl-sn-glycero-3-phospho-(1D-myo-inositol) + CoA. The catalysed reaction is 1-acyl-sn-glycero-3-phospho-(1'-sn-glycerol) + an acyl-CoA = a 1,2-diacyl-sn-glycero-3-phospho-(1'-sn-glycerol) + CoA. It carries out the reaction 1-hexadecanoyl-sn-glycero-3-phosphate + (9Z)-octadecenoyl-CoA = 1-hexadecanoyl-2-(9Z-octadecenoyl)-sn-glycero-3-phosphate + CoA. The enzyme catalyses 1-(9Z-octadecenoyl)-sn-glycero-3-phosphate + (9Z)-octadecenoyl-CoA = 1,2-di-(9Z-octadecenoyl)-sn-glycero-3-phosphate + CoA. It catalyses the reaction 1-(9Z,12Z)-octadecadienoyl-sn-glycero-3-phosphate + (9Z)-octadecenoyl-CoA = 1-(9Z,12Z)-octadecadienoyl-2-(9Z)-octadecenoyl-sn-glycero-3-phosphate + CoA. The catalysed reaction is 1-(9Z,12Z,15Z)-octadecatrienoyl-sn-glycero-3-phosphate + (9Z)-octadecenoyl-CoA = 1-(9Z,12Z,15Z)-octadecatrienoyl-2-(9Z)-octadecenoyl-sn-glycero-3-phosphate + CoA. It carries out the reaction 1-(9Z-octadecenoyl)-sn-glycero-3-phosphate + hexadecanoyl-CoA = 1-(9Z)-octadecenoyl-2-hexadecanoyl-sn-glycero-3-phosphate + CoA. The enzyme catalyses 1-(9Z-octadecenoyl)-sn-glycero-3-phosphate + octadecanoyl-CoA = 1-(9Z-octadecenoyl)-2-octadecanoyl-sn-glycero-3-phosphate + CoA. It catalyses the reaction 1-acyl-sn-glycero-3-phospho-(1'-sn-glycerol) + (9Z)-octadecenoyl-CoA = 1-acyl-2-(9Z-octadecenoyl)-sn-glycero-3-phospho-(1'-sn-glycerol) + CoA. The catalysed reaction is a 1-acyl-sn-glycero-3-phospho-(1D-myo-inositol) + (9Z)-octadecenoyl-CoA = a 1-acyl-2-(9Z-octadecenoyl)-sn-glycero-3-phospho-(1D-myo-inositol) + CoA. It carries out the reaction 1-hexadecanoyl-sn-glycero-3-phospho-(1D-myo-inositol) + hexadecanoyl-CoA = 1,2-dihexadecanoyl-sn-glycero-3-phospho-(1D-myo-inositol) + CoA. The enzyme catalyses 1-hexadecanoyl-sn-glycero-3-phospho-(1D-myo-inositol) + octadecanoyl-CoA = 1-hexadecanoyl-2-octadecanoyl-sn-glycero-3-phospho-(1D-myo-inositol) + CoA. It catalyses the reaction 1-hexadecanoyl-sn-glycero-3-phospho-(1D-myo-inositol) + (9Z)-octadecenoyl-CoA = 1-hexadecanoyl-2-(9Z-octadecenoyl)-sn-glycero-3-phospho-(1D-myo-inositol) + CoA. The catalysed reaction is 1-hexadecanoyl-sn-glycero-3-phospho-(1D-myo-inositol) + (9Z,12Z)-octadecadienoyl-CoA = 1-hexadecanoyl-2-(9Z,12Z-octadecadienoyl)-sn-glycero-3-phospho-(1D-myo-inositol) + CoA. It carries out the reaction 1-hexadecanoyl-sn-glycero-3-phospho-(1D-myo-inositol) + (5Z,8Z,11Z,14Z)-eicosatetraenoyl-CoA = 1-hexadecanoyl-2-(5Z,8Z,11Z,14Z-eicosatetraenoyl)-sn-glycero-3-phospho-D-myo-inositol + CoA. The enzyme catalyses 1-hexadecanoyl-sn-glycero-3-phospho-(1'-sn-glycerol) + hexadecanoyl-CoA = 1,2-dihexadecanoyl-sn-glycero-3-phospho-(1'-sn-glycerol) + CoA. It catalyses the reaction 1-hexadecanoyl-sn-glycero-3-phospho-(1'-sn-glycerol) + octadecanoyl-CoA = 1-hexadecanoyl-2-octadecanoyl-sn-glycero-3-phospho-(1'-sn-glycerol) + CoA. The catalysed reaction is 1-hexadecanoyl-sn-glycero-3-phospho-(1'-sn-glycerol) + (9Z)-octadecenoyl-CoA = 1-hexadecanoyl-2-(9Z-octadecenoyl)-sn-glycero-3-phospho-(1'-sn-glycerol) + CoA. It carries out the reaction 1-hexadecanoyl-sn-glycero-3-phospho-(1'-sn-glycerol) + (9Z,12Z)-octadecadienoyl-CoA = 1-hexadecanoyl-2-(9Z,12Z-octadecadienoyl)-sn-glycero-3-phospho-(1'-sn-glycerol) + CoA. The enzyme catalyses 1-tetradecanoyl-sn-glycero-3-phospho-(1'-sn-glycerol) + (9Z)-octadecenoyl-CoA = 1-tetradecanoyl-2-(9Z-octadecenoyl)-sn-glycero-3-phospho-(1'-sn-glycerol) + CoA. It catalyses the reaction 1-octadecanoyl-sn-glycero-3-phospho-(1'-sn-glycerol) + (9Z)-octadecenoyl-CoA = 1-octadecanoyl-2-(9Z-octadecenoyl)-sn-glycero-3-phospho-(1'-sn-glycerol) + CoA. The catalysed reaction is 1-(9Z-octadecenoyl)-sn-glycero-3-phospho-(1'-sn-glycerol) + (9Z)-octadecenoyl-CoA = 1,2-di-(9Z-octadecenoyl)-sn-glycero-3-phospho-(1'-sn-glycerol) + CoA. It carries out the reaction 1-hexadecanoyl-sn-glycero-3-phospho-(1D-myo-inositol) + dodecanoyl-CoA = 1-hexadecanoyl-2-dodecanoyl-sn-glycero-3-phospho-(1D-myo-inositol) + CoA. The enzyme catalyses 1',3'-bis-[1-acyl-sn-glycero-3-phospho]-glycerol + (9Z)-octadecenoyl-CoA = 1'-[1-acyl-2-(9Z)-octadecenoyl-sn-glycero-3-phospho],3'-[1-acyl,2-hydroxy-sn-glycero-3-phospho]-glycerol + CoA. It catalyses the reaction 1'-[1,2-diacyl-sn-glycero-3-phospho],3'-[1-acyl-sn-glycero-3-phospho]-glycerol + (9Z)-octadecenoyl-CoA = 1'-[1,2-diacyl-sn-glycero-3-phospho],3'-[1-acyl,2-(9Z)-octadecenoyl-sn-glycero-3-phospho]-glycerol + CoA. The catalysed reaction is 1'-[1,2-diacyl-sn-glycero-3-phospho],3'-[1-acyl-sn-glycero-3-phospho]-glycerol + (9Z,12Z)-octadecadienoyl-CoA = 1'-[1,2-diacyl-sn-glycero-3-phospho],3'-[1-acyl,2-(9Z,12Z)-octadecadienoyl-sn-glycero-3-phospho]-glycerol + CoA. It carries out the reaction 1'-[1,2-diacyl-sn-glycero-3-phospho],3'-[1-acyl-sn-glycero-3-phospho]-glycerol + dodecanoyl-CoA = 1'-[1,2-diacyl-sn-glycero-3-phospho],3'-[1-acyl,2-dodecanoyl-sn-glycero-3-phospho]-glycerol + CoA. The enzyme catalyses 1',3'-bis-[1-acyl-sn-glycero-3-phospho]-glycerol + dodecanoyl-CoA = 1'-[1-acyl-2-dodecanoyl-sn-glycero-3-phospho],3'-[1-acyl,2-hydroxy-sn-glycero-3-phospho]-glycerol + CoA. It catalyses the reaction a 1-acyl-sn-glycero-3-phosphate + (9Z)-octadecenoyl-CoA = a 1-acyl-2-(9Z-octadecenoyl)-sn-glycero-3-phosphate + CoA. The catalysed reaction is 1',3'-bis-[1-acyl-sn-glycero-3-phospho]-glycerol + (9Z,12Z)-octadecadienoyl-CoA = 1'-[1-acyl-2-(9Z,12Z)-octadecadienoyl-sn-glycero-3-phospho],3'-[1-acyl,2-hydroxy-sn-glycero-3-phospho]-glycerol + CoA. It carries out the reaction 1',3'-bis-[1-acyl-sn-glycero-3-phospho]-glycerol + hexadecanoyl-CoA = 1'-[1-acyl-2-hexadecanoyl-sn-glycero-3-phospho],3'-[1-acyl,2-hydroxy-sn-glycero-3-phospho]-glycerol + CoA. The enzyme catalyses 1',3'-bis-[1-acyl-sn-glycero-3-phospho]-glycerol + octadecanoyl-CoA = 1'-[1-acyl-2-octadecanoyl-sn-glycero-3-phospho],3'-[1-acyl,2-hydroxy-sn-glycero-3-phospho]-glycerol + CoA. It catalyses the reaction 1'-[1,2-diacyl-sn-glycero-3-phospho],3'-[1-acyl-sn-glycero-3-phospho]-glycerol + octanoyl-CoA = 1'-[1,2-diacyl-sn-glycero-3-phospho],3'-[1-acyl,2-octanoyl-sn-glycero-3-phospho]-glycerol + CoA. The catalysed reaction is 1',3'-bis-[1-acyl-sn-glycero-3-phospho]-glycerol + octanoyl-CoA = 1'-[1-acyl-2-octanoyl-sn-glycero-3-phospho],3'-[1-acyl,2-hydroxy-sn-glycero-3-phospho]-glycerol + CoA. It carries out the reaction 1'-[1,2-diacyl-sn-glycero-3-phospho],3'-[1-acyl-sn-glycero-3-phospho]-glycerol + hexadecanoyl-CoA = 1'-[1,2-diacyl-sn-glycero-3-phospho],3'-[1-acyl,2-hexadecanoyl-sn-glycero-3-phospho]-glycerol + CoA. The enzyme catalyses 1'-[1,2-diacyl-sn-glycero-3-phospho],3'-[1-acyl-sn-glycero-3-phospho]-glycerol + (5Z,8Z,11Z,14Z)-eicosatetraenoyl-CoA = 1'-[1,2-diacyl-sn-glycero-3-phospho],3'-[1-acyl,2-(5Z,8Z,11Z,14Z)-eicosatetraenoyl-sn-glycero-3-phospho]-glycerol + CoA. It catalyses the reaction 1',3'-bis-[1-acyl-sn-glycero-3-phospho]-glycerol + (5Z,8Z,11Z,14Z)-eicosatetraenoyl-CoA = 1'-[1-acyl-2-(5Z,8Z,11Z,14Z)-eicosatetraenoyl-sn-glycero-3-phospho],3'-[1-acyl,2-hydroxy-sn-glycero-3-phospho]-glycerol + CoA. The catalysed reaction is a 1-acyl-sn-glycero-3-phospho-(1D-myo-inositol) + octadecanoyl-CoA = a 1-acyl-2-octadecanoyl-sn-glycero-3-phospho-(1D-myo-inositol) + CoA. It carries out the reaction a 2-acyl-sn-glycero-3-phospho-D-myo-inositol + octadecanoyl-CoA = 1-octadecanoyl-2-acyl-sn-glycero-3-phospho-1D-myo-inositol + CoA. Its pathway is phospholipid metabolism; CDP-diacylglycerol biosynthesis; CDP-diacylglycerol from sn-glycerol 3-phosphate: step 2/3. Its function is as follows. Exhibits acyl-CoA:lysocardiolipin acyltransferase (ALCAT) activity; catalyzes the reacylation of lyso-cardiolipin to cardiolipin (CL), a key step in CL remodeling. Recognizes both monolysocardiolipin and dilysocardiolipin as substrates with a preference for linoleoyl-CoA and oleoyl-CoA as acyl donors. Also exhibits 1-acyl-sn-glycerol-3-phosphate acyltransferase activity (AGPAT) activity; converts 1-acyl-sn-glycerol-3- phosphate (lysophosphatidic acid or LPA) into 1,2-diacyl-sn-glycerol-3- phosphate (phosphatidic acid or PA) by incorporating an acyl moiety at the sn-2 position of the glycerol backbone. Possesses lysophosphatidylinositol acyltransferase (LPIAT) activity. Possesses lysophosphatidylglycerol acyltransferase (LPGAT) activity. Required for establishment of the hematopoietic and endothelial lineages. The chain is Lysocardiolipin acyltransferase 1 (Lclat1) from Mus musculus (Mouse).